The chain runs to 404 residues: Ribosomal RNA large subunit methyltransferase F (404 aa).

Basic residues-rich tracts occupy residues 1 to 10 (MTKHSQKQNR) and 18 to 29 (QTRRKKPAGKLK). Disordered stretches follow at residues 1–54 (MTKH…HERN), 156–177 (GTRQNVPYASKPESSAPKQRYK), and 289–308 (RAAKGHKPEPAASKAKPDAN). Residues 30–54 (AKSEAKLDTRGKPETTEKKGLHERN) show a composition bias toward basic and acidic residues. Polar residues predominate over residues 157-172 (TRQNVPYASKPESSAP).

The protein belongs to the methyltransferase superfamily. METTL16/RlmF family.

It is found in the cytoplasm. The enzyme catalyses adenosine(1618) in 23S rRNA + S-adenosyl-L-methionine = N(6)-methyladenosine(1618) in 23S rRNA + S-adenosyl-L-homocysteine + H(+). In terms of biological role, specifically methylates the adenine in position 1618 of 23S rRNA. In Shewanella sediminis (strain HAW-EB3), this protein is Ribosomal RNA large subunit methyltransferase F.